The primary structure comprises 403 residues: Phosphopentomutase (403 aa).

Mn(2+) contacts are provided by Asp-13, Asp-298, His-303, Asp-339, His-340, and His-351.

It belongs to the phosphopentomutase family. Mn(2+) is required as a cofactor.

It is found in the cytoplasm. The enzyme catalyses 2-deoxy-alpha-D-ribose 1-phosphate = 2-deoxy-D-ribose 5-phosphate. It carries out the reaction alpha-D-ribose 1-phosphate = D-ribose 5-phosphate. It functions in the pathway carbohydrate degradation; 2-deoxy-D-ribose 1-phosphate degradation; D-glyceraldehyde 3-phosphate and acetaldehyde from 2-deoxy-alpha-D-ribose 1-phosphate: step 1/2. In terms of biological role, isomerase that catalyzes the conversion of deoxy-ribose 1-phosphate (dRib-1-P) and ribose 1-phosphate (Rib-1-P) to deoxy-ribose 5-phosphate (dRib-5-P) and ribose 5-phosphate (Rib-5-P), respectively. The chain is Phosphopentomutase from Streptococcus uberis (strain ATCC BAA-854 / 0140J).